A 294-amino-acid polypeptide reads, in one-letter code: Probable aspartoacylase (294 aa).

The Zn(2+) site is built by His14 and Glu17. Substrate is bound by residues Arg56 and 63–64 (NR). A Zn(2+)-binding site is contributed by His106. Positions 164 and 275 each coordinate substrate.

The protein belongs to the AspA/AstE family. Aspartoacylase subfamily. Zn(2+) serves as cofactor.

It carries out the reaction an N-acyl-L-aspartate + H2O = a carboxylate + L-aspartate. The polypeptide is Probable aspartoacylase (Nostoc sp. (strain PCC 7120 / SAG 25.82 / UTEX 2576)).